The primary structure comprises 519 residues: Cytochrome P450 monooxygenase easM (519 aa).

A helical transmembrane segment spans residues 16–33 (VAPALFASSISVLFLILS). Asparagine 50 and asparagine 353 each carry an N-linked (GlcNAc...) asparagine glycan. Heme is bound at residue cysteine 458.

Belongs to the cytochrome P450 family. Requires heme as cofactor.

The protein localises to the membrane. It participates in alkaloid biosynthesis; ergot alkaloid biosynthesis. In terms of biological role, cytochrome P450 monooxygenase; part of the gene cluster that mediates the biosynthesis of fumiclavanine C, a fungal ergot alkaloid. DmaW catalyzes the first step of ergot alkaloid biosynthesis by condensing dimethylallyl diphosphate (DMAP) and tryptophan to form 4-dimethylallyl-L-tryptophan. The second step is catalyzed by the methyltransferase easF that methylates 4-dimethylallyl-L-tryptophan in the presence of S-adenosyl-L-methionine, resulting in the formation of 4-dimethylallyl-L-abrine. The catalase easC and the FAD-dependent oxidoreductase easE then transform 4-dimethylallyl-L-abrine to chanoclavine-I which is further oxidized by EasD in the presence of NAD(+), resulting in the formation of chanoclavine-I aldehyde. EasA reduces chanoclavine-I aldehyde to dihydrochanoclavine-I aldehyde that spontaneously dehydrates to form 6,8-dimethyl-6,7-didehydroergoline. EasG then catalyzes the reduction of 6,8-dimethyl-6,7-didehydroergoline to form festuclavine. Hydrolysis of festuclavine by easM then leads to the formation of fumigaclavine B which is in turn acetylated by easN to fumigaclavine A. Finally, easL catalyzes the conversion of fumigaclavine A into fumigaclavine C by attaching a dimethylallyl moiety to C-2 of the indole nucleus. The protein is Cytochrome P450 monooxygenase easM of Aspergillus fumigatus (strain ATCC MYA-4609 / CBS 101355 / FGSC A1100 / Af293) (Neosartorya fumigata).